Reading from the N-terminus, the 1220-residue chain is DNA polymerase catalytic subunit (1220 aa).

Disordered stretches follow at residues 21–43 and 641–691; these read GKRP…RPPQ and QADA…KPGV. Over residues 646 to 660 the composition is skewed to polar residues; sequence SETSELAMDSQSHAF.

It belongs to the DNA polymerase type-B family. In terms of assembly, forms a complex with the ssDNA-binding protein, the DNA polymerase processivity factor, and the alkaline exonuclease. Interacts with the helicase-primase complex composed of the primase, the helicase and the primase-associated factor; this interaction may coordinate leading and lagging strand DNA synthesis at the replication fork.

Its subcellular location is the host nucleus. It carries out the reaction DNA(n) + a 2'-deoxyribonucleoside 5'-triphosphate = DNA(n+1) + diphosphate. It catalyses the reaction Endonucleolytic cleavage to 5'-phosphomonoester.. Its function is as follows. Replicates viral genomic DNA. The replication complex is composed of six viral proteins: the DNA polymerase, processivity factor, primase, primase-associated factor, helicase, and ssDNA-binding protein. Additionally, the polymerase contains an intrinsic ribonuclease H (RNase H) activity that specifically degrades RNA/DNA heteroduplexes or duplex DNA substrates in the 5' to 3' direction. Therefore, it can catalyze the excision of the RNA primers that initiate the synthesis of Okazaki fragments at a replication fork during viral DNA replication. This Equine herpesvirus 1 (strain Ab4p) (EHV-1) protein is DNA polymerase catalytic subunit.